Reading from the N-terminus, the 270-residue chain is Type III pantothenate kinase (270 aa).

Position 19–26 (19–26 (DIGNTSTT)) interacts with ATP. Substrate-binding positions include Y109 and 116 to 119 (GADR). The active-site Proton acceptor is D118. D139 is a K(+) binding site. T142 is a binding site for ATP. T194 lines the substrate pocket.

This sequence belongs to the type III pantothenate kinase family. As to quaternary structure, homodimer. Requires NH4(+) as cofactor. The cofactor is K(+).

Its subcellular location is the cytoplasm. The enzyme catalyses (R)-pantothenate + ATP = (R)-4'-phosphopantothenate + ADP + H(+). Its pathway is cofactor biosynthesis; coenzyme A biosynthesis; CoA from (R)-pantothenate: step 1/5. Catalyzes the phosphorylation of pantothenate (Pan), the first step in CoA biosynthesis. The polypeptide is Type III pantothenate kinase (Chlorobaculum tepidum (strain ATCC 49652 / DSM 12025 / NBRC 103806 / TLS) (Chlorobium tepidum)).